The primary structure comprises 157 residues: Dihydrofolate reductase type 5 (157 aa).

The DHFR domain maps to 2-156; that stretch reads KVSLMAAKAK…INYCYQIWQK (155 aa).

Belongs to the dihydrofolate reductase family. As to quaternary structure, homodimer.

The catalysed reaction is (6S)-5,6,7,8-tetrahydrofolate + NADP(+) = 7,8-dihydrofolate + NADPH + H(+). The protein operates within cofactor biosynthesis; tetrahydrofolate biosynthesis; 5,6,7,8-tetrahydrofolate from 7,8-dihydrofolate: step 1/1. Its function is as follows. Key enzyme in folate metabolism. Catalyzes an essential reaction for de novo glycine and purine synthesis, and for DNA precursor synthesis. This Escherichia coli protein is Dihydrofolate reductase type 5 (dhfrV).